We begin with the raw amino-acid sequence, 512 residues long: RCC1 domain-containing protein DDB_G0279253 (512 aa).

8 RCC1 repeats span residues 1 to 56 (MKIY…MIID), 58 to 134 (GDLY…ACDN), 135 to 185 (NGNI…NNNN), 197 to 248 (SGGV…ALSS), 249 to 319 (ENDV…LLDI), 321 to 384 (FKNV…LLTN), 386 to 443 (DKLY…IQVY), and 454 to 512 (NNNI…FILP). A compositionally biased stretch (polar residues) spans 66–77 (NDSGQLGINSNE). Disordered regions lie at residues 66–85 (NDSGQLGINSNEQQQQQQQQ) and 162–200 (STSNNKNNNNNNNNNNNNNNNNNNNNNNNNNNNNNSGGV). Low complexity predominate over residues 162 to 196 (STSNNKNNNNNNNNNNNNNNNNNNNNNNNNNNNNN).

This Dictyostelium discoideum (Social amoeba) protein is RCC1 domain-containing protein DDB_G0279253.